Consider the following 109-residue polypeptide: MAPLTAAEVSSLLAELGPHAETQEKKEALGVSAYRALFGAKPEYINLFSKLQGLTIDNVFIKYYGGTLVTTRNVNKQQFLSGEPIFVDFFKKMQKLLHHIFPIAGIHAL.

The Globin domain occupies 3–109 (PLTAAEVSSL…IFPIAGIHAL (107 aa)).

This sequence belongs to the globin family. Monomer.

Functionally, oxygen binding protein. The protein is Globin of Dicrocoelium dendriticum (Small liver fluke).